A 240-amino-acid chain; its full sequence is Aspartate/glutamate leucyltransferase (240 aa).

This sequence belongs to the R-transferase family. Bpt subfamily.

Its subcellular location is the cytoplasm. The enzyme catalyses N-terminal L-glutamyl-[protein] + L-leucyl-tRNA(Leu) = N-terminal L-leucyl-L-glutamyl-[protein] + tRNA(Leu) + H(+). It carries out the reaction N-terminal L-aspartyl-[protein] + L-leucyl-tRNA(Leu) = N-terminal L-leucyl-L-aspartyl-[protein] + tRNA(Leu) + H(+). In terms of biological role, functions in the N-end rule pathway of protein degradation where it conjugates Leu from its aminoacyl-tRNA to the N-termini of proteins containing an N-terminal aspartate or glutamate. This chain is Aspartate/glutamate leucyltransferase, found in Bordetella avium (strain 197N).